Here is a 613-residue protein sequence, read N- to C-terminus: ATP-dependent zinc metalloprotease FtsH (613 aa).

Residues 1–4 lie on the Cytoplasmic side of the membrane; that stretch reads MVKN. A helical transmembrane segment spans residues 5–25; the sequence is LIFWLVITVVLMSVFQNFNSS. Topologically, residues 26-98 are extracellular; it reads DTSNHRVDYS…VGEIPEEPSL (73 aa). A helical transmembrane segment spans residues 99-119; the sequence is LISIFISWFPMLLLIGVWIFF. The Cytoplasmic segment spans residues 120–613; it reads MRQMQMGGGK…WLEVDQKKDI (494 aa). 192-199 serves as a coordination point for ATP; sequence GPPGTGKT. Residue His-414 participates in Zn(2+) binding. Glu-415 is a catalytic residue. Positions 418 and 492 each coordinate Zn(2+).

It in the central section; belongs to the AAA ATPase family. The protein in the C-terminal section; belongs to the peptidase M41 family. Homohexamer. Zn(2+) is required as a cofactor.

It is found in the cell membrane. In terms of biological role, acts as a processive, ATP-dependent zinc metallopeptidase for both cytoplasmic and membrane proteins. Plays a role in the quality control of integral membrane proteins. The polypeptide is ATP-dependent zinc metalloprotease FtsH (Buchnera aphidicola subsp. Schizaphis graminum (strain Sg)).